Here is a 532-residue protein sequence, read N- to C-terminus: IQ domain-containing protein IQM4 (532 aa).

Disordered stretches follow at residues 47–67 (SRTN…TGME) and 85–104 (PMNK…RNSL). Basic and acidic residues predominate over residues 56–66 (NPQEKSPKTGM). The segment covering 85–94 (PMNKEDEEIV) has biased composition (acidic residues). Residues 136-165 (LDAAATTLQKVYKSYRTRRNLADCAVVVEE) enclose the IQ domain. Disordered stretches follow at residues 410-443 (SSGY…KERE) and 487-513 (PRIS…PRVR). Polar residues predominate over residues 487 to 496 (PRISPGSTRF). Positions 499 to 509 (PYGPIPSPRPS) are enriched in pro residues.

Expressed in roots, cauline leaves and flowers, and at lower levels in rosette leaves, stems and siliques.

The protein resides in the cytoplasm. It localises to the nucleus. Functionally, may be involved in biotic and abiotic stress responses. This Arabidopsis thaliana (Mouse-ear cress) protein is IQ domain-containing protein IQM4.